A 956-amino-acid polypeptide reads, in one-letter code: uncharacterized protein (956 aa).

Residues 918-942 (NSINEAIEKLNEAADAYQAIIDQQK) are a coiled coil.

This is an uncharacterized protein from Acanthamoeba polyphaga (Amoeba).